We begin with the raw amino-acid sequence, 177 residues long: Small ribosomal subunit protein uS5 (177 aa).

An S5 DRBM domain is found at 19–82; that stretch reads WQERVVQIRR…ADGKKQLVEV (64 aa).

The protein belongs to the universal ribosomal protein uS5 family. Part of the 30S ribosomal subunit. Contacts proteins S4 and S8.

In terms of biological role, with S4 and S12 plays an important role in translational accuracy. Located at the back of the 30S subunit body where it stabilizes the conformation of the head with respect to the body. In Acaryochloris marina (strain MBIC 11017), this protein is Small ribosomal subunit protein uS5.